The chain runs to 357 residues: Alanine racemase (357 aa).

The active-site Proton acceptor; specific for D-alanine is the lysine 35. Lysine 35 carries the post-translational modification N6-(pyridoxal phosphate)lysine. Arginine 131 provides a ligand contact to substrate. The active-site Proton acceptor; specific for L-alanine is tyrosine 256. Residue methionine 304 coordinates substrate.

It belongs to the alanine racemase family. Requires pyridoxal 5'-phosphate as cofactor.

It carries out the reaction L-alanine = D-alanine. It functions in the pathway amino-acid biosynthesis; D-alanine biosynthesis; D-alanine from L-alanine: step 1/1. Its function is as follows. Catalyzes the interconversion of L-alanine and D-alanine. May also act on other amino acids. In Legionella pneumophila (strain Corby), this protein is Alanine racemase (alr).